A 386-amino-acid polypeptide reads, in one-letter code: 1-deoxy-D-xylulose 5-phosphate reductoisomerase (386 aa).

The NADPH site is built by threonine 13, glycine 14, serine 15, isoleucine 16, asparagine 40, and asparagine 122. Lysine 123 contributes to the 1-deoxy-D-xylulose 5-phosphate binding site. Residue glutamate 124 coordinates NADPH. Aspartate 148 lines the Mn(2+) pocket. Serine 149, glutamate 150, serine 177, and histidine 201 together coordinate 1-deoxy-D-xylulose 5-phosphate. Residue glutamate 150 coordinates Mn(2+). An NADPH-binding site is contributed by glycine 207. The 1-deoxy-D-xylulose 5-phosphate site is built by serine 214, asparagine 219, lysine 220, and glutamate 223. Position 223 (glutamate 223) interacts with Mn(2+).

It belongs to the DXR family. Mg(2+) is required as a cofactor. It depends on Mn(2+) as a cofactor.

The catalysed reaction is 2-C-methyl-D-erythritol 4-phosphate + NADP(+) = 1-deoxy-D-xylulose 5-phosphate + NADPH + H(+). Its pathway is isoprenoid biosynthesis; isopentenyl diphosphate biosynthesis via DXP pathway; isopentenyl diphosphate from 1-deoxy-D-xylulose 5-phosphate: step 1/6. Functionally, catalyzes the NADPH-dependent rearrangement and reduction of 1-deoxy-D-xylulose-5-phosphate (DXP) to 2-C-methyl-D-erythritol 4-phosphate (MEP). This Francisella tularensis subsp. holarctica (strain OSU18) protein is 1-deoxy-D-xylulose 5-phosphate reductoisomerase.